The sequence spans 346 residues: 3-keto-steroid reductase ERG27 (346 aa).

Residues L19, T42, and K48 each contribute to the NADP(+) site. Catalysis depends on proton donor residues S182 and Y205. Residues Y205, K209, and S241 each contribute to the NADP(+) site. K209 serves as the catalytic Lowers pKa of active site Tyr. A helical membrane pass occupies residues 242–262 (FSFFQYLNVFTYYGMLFLFYL). N-linked (GlcNAc...) asparagine glycosylation occurs at N272.

Belongs to the short-chain dehydrogenases/reductases (SDR) family. ERG27 subfamily. Heterotetramer of ERG25, ERG26, ERG27 and ERG28. ERG28 acts as a scaffold to tether ERG27 and other 4,4-demethylation-related enzymes, forming a demethylation enzyme complex, in the endoplasmic reticulum. Interacts with ERG25 and ERG28. Also interacts with ERG7, but only in lipid particles.

The protein localises to the endoplasmic reticulum membrane. Its subcellular location is the lipid droplet. It catalyses the reaction 3-dehydro-4alpha-methylzymosterol + NADPH + H(+) = 4alpha-methylzymosterol + NADP(+). Its pathway is steroid biosynthesis; zymosterol biosynthesis; zymosterol from lanosterol: step 5/6. In terms of biological role, 3-keto-steroid reductase; part of the third module of ergosterol biosynthesis pathway that includes the late steps of the pathway. ERG27 is a catalytic component of the C-4 demethylation complex that catalyzes the reduction of the keto group on the C-3. The third module or late pathway involves the ergosterol synthesis itself through consecutive reactions that mainly occur in the endoplasmic reticulum (ER) membrane. Firstly, the squalene synthase ERG9 catalyzes the condensation of 2 farnesyl pyrophosphate moieties to form squalene, which is the precursor of all steroids. Squalene synthase is crucial for balancing the incorporation of farnesyl diphosphate (FPP) into sterol and nonsterol isoprene synthesis. Secondly, the squalene epoxidase ERG1 catalyzes the stereospecific oxidation of squalene to (S)-2,3-epoxysqualene, which is considered to be a rate-limiting enzyme in steroid biosynthesis. Then, the lanosterol synthase ERG7 catalyzes the cyclization of (S)-2,3 oxidosqualene to lanosterol, a reaction that forms the sterol core. In the next steps, lanosterol is transformed to zymosterol through a complex process involving various demethylation, reduction and desaturation reactions. The lanosterol 14-alpha-demethylase ERG11 (also known as CYP51) catalyzes C14-demethylation of lanosterol to produce 4,4'-dimethyl cholesta-8,14,24-triene-3-beta-ol, which is critical for ergosterol biosynthesis. The C-14 reductase ERG24 reduces the C14=C15 double bond of 4,4-dimethyl-cholesta-8,14,24-trienol to produce 4,4-dimethyl-cholesta-8,24-dienol. 4,4-dimethyl-cholesta-8,24-dienol is substrate of the C-4 demethylation complex ERG25-ERG26-ERG27 in which ERG25 catalyzes the three-step monooxygenation required for the demethylation of 4,4-dimethyl and 4alpha-methylsterols, ERG26 catalyzes the oxidative decarboxylation that results in a reduction of the 3-beta-hydroxy group at the C-3 carbon to an oxo group, and ERG27 is responsible for the reduction of the keto group on the C-3. ERG28 has a role as a scaffold to help anchor ERG25, ERG26 and ERG27 to the endoplasmic reticulum and ERG29 regulates the activity of the iron-containing C4-methylsterol oxidase ERG25. Then, the sterol 24-C-methyltransferase ERG6 catalyzes the methyl transfer from S-adenosyl-methionine to the C-24 of zymosterol to form fecosterol. The C-8 sterol isomerase ERG2 catalyzes the reaction which results in unsaturation at C-7 in the B ring of sterols and thus converts fecosterol to episterol. The sterol-C5-desaturase ERG3 then catalyzes the introduction of a C-5 double bond in the B ring to produce 5-dehydroepisterol. The C-22 sterol desaturase ERG5 further converts 5-dehydroepisterol into ergosta-5,7,22,24(28)-tetraen-3beta-ol by forming the C-22(23) double bond in the sterol side chain. Finally, ergosta-5,7,22,24(28)-tetraen-3beta-ol is substrate of the C-24(28) sterol reductase ERG4 to produce ergosterol. Its function is as follows. Facilitates the association of ERG7 with lipid particles preventing its digestion in the endoplasmic reticulum and the lipid particles. The polypeptide is 3-keto-steroid reductase ERG27 (Candida albicans (strain SC5314 / ATCC MYA-2876) (Yeast)).